The following is a 134-amino-acid chain: ATP synthase epsilon chain (134 aa).

This sequence belongs to the ATPase epsilon chain family. In terms of assembly, F-type ATPases have 2 components, CF(1) - the catalytic core - and CF(0) - the membrane proton channel. CF(1) has five subunits: alpha(3), beta(3), gamma(1), delta(1), epsilon(1). CF(0) has three main subunits: a, b and c.

Its subcellular location is the cell inner membrane. Its function is as follows. Produces ATP from ADP in the presence of a proton gradient across the membrane. The chain is ATP synthase epsilon chain from Rhodospirillum rubrum (strain ATCC 11170 / ATH 1.1.1 / DSM 467 / LMG 4362 / NCIMB 8255 / S1).